We begin with the raw amino-acid sequence, 978 residues long: Serine/threonine-protein kinase PLK4 (978 aa).

One can recognise a Protein kinase domain in the interval 13–266 (FQVLDLLGKG…LSGILDHPFI (254 aa)). ATP is bound by residues 19–27 (LGKGGFACV) and Lys-42. The active-site Proton acceptor is Asp-137. Polar residues-rich tracts occupy residues 271 to 282 (LNTKYSSPTRQH) and 291 to 304 (SLDS…TIST). 4 disordered regions span residues 271-381 (LNTK…TRTS), 489-578 (IEQP…AERL), 788-818 (AWKN…SSPS), and 838-869 (AQTT…QPIP). Over residues 324-335 (RTSDIWPRDPKH) the composition is skewed to basic and acidic residues. 2 stretches are compositionally biased toward polar residues: residues 351–362 (TENVTTGSSSHV) and 371–381 (AQYSGLKTRTS). 2 stretches are compositionally biased toward basic and acidic residues: residues 518 to 527 (GSDSVSKDFD) and 536 to 566 (ESRR…DKSL). The Cryptic POLO box 1 (CPB1) domain maps to 565–678 (SLGELTEPLN…AKFVQLVRKL (114 aa)). The Cryptic POLO box 2 (CPB2) domain occupies 679–792 (TPKVTLYSKH…GRRPPAWKNS (114 aa)). The segment covering 801–818 (QQGCSNGQSQPVLPSSPS) has biased composition (polar residues). A compositionally biased stretch (basic residues) spans 848–862 (KSRKTSPSKTSRHKQ). The POLO box domain maps to 895–973 (HVCKMAFVDG…LPAVIKTLAT (79 aa)).

This sequence belongs to the protein kinase superfamily. Ser/Thr protein kinase family. CDC5/Polo subfamily. As to quaternary structure, homodimer. Ubiquitinated; leading to its degradation by the proteasome.

It is found in the cytoplasm. Its subcellular location is the cytoskeleton. The protein resides in the microtubule organizing center. It localises to the centrosome. The protein localises to the centriole. The enzyme catalyses L-seryl-[protein] + ATP = O-phospho-L-seryl-[protein] + ADP + H(+). It catalyses the reaction L-threonyl-[protein] + ATP = O-phospho-L-threonyl-[protein] + ADP + H(+). Functionally, serine/threonine-protein kinase that plays a central role in centriole duplication. Able to trigger procentriole formation on the surface of the mother centriole cylinder, leading to the recruitment of centriole biogenesis proteins. When overexpressed, it is able to induce centrosome amplification through the simultaneous generation of multiple procentrioles adjoining each parental centriole during S phase. This Nematostella vectensis (Starlet sea anemone) protein is Serine/threonine-protein kinase PLK4.